A 206-amino-acid polypeptide reads, in one-letter code: MKIDITSVNGETAGSIDLDDAIFGLEPRVDLIARMIRYQLAKRRAGTHQSLGRADIHRTGKKMYKQKGTGSARHGSARAPQFRGGGKAFGPVARSHEHDLPKKIRALALKHALSAKAKDGGIIIWNDAKIPEAKTKGLKANFEKIGLTNALIIDGAELETNFSLAARNIPQIDVLPVQGINVYDIVRRDKLVLTTAAINALEARFK.

Residues 63–85 are disordered; that stretch reads MYKQKGTGSARHGSARAPQFRGG.

This sequence belongs to the universal ribosomal protein uL4 family. Part of the 50S ribosomal subunit.

One of the primary rRNA binding proteins, this protein initially binds near the 5'-end of the 23S rRNA. It is important during the early stages of 50S assembly. It makes multiple contacts with different domains of the 23S rRNA in the assembled 50S subunit and ribosome. In terms of biological role, forms part of the polypeptide exit tunnel. This chain is Large ribosomal subunit protein uL4, found in Beijerinckia indica subsp. indica (strain ATCC 9039 / DSM 1715 / NCIMB 8712).